Here is a 104-residue protein sequence, read N- to C-terminus: Large ribosomal subunit protein uL24 (104 aa).

Belongs to the universal ribosomal protein uL24 family. As to quaternary structure, part of the 50S ribosomal subunit.

One of two assembly initiator proteins, it binds directly to the 5'-end of the 23S rRNA, where it nucleates assembly of the 50S subunit. Functionally, one of the proteins that surrounds the polypeptide exit tunnel on the outside of the subunit. The protein is Large ribosomal subunit protein uL24 of Caulobacter sp. (strain K31).